The following is a 123-amino-acid chain: Large ribosomal subunit protein eL8 (123 aa).

The protein belongs to the eukaryotic ribosomal protein eL8 family. In terms of assembly, part of the 50S ribosomal subunit. Probably part of the RNase P complex.

Its subcellular location is the cytoplasm. Its function is as follows. Multifunctional RNA-binding protein that recognizes the K-turn motif in ribosomal RNA, the RNA component of RNase P, box H/ACA, box C/D and box C'/D' sRNAs. The polypeptide is Large ribosomal subunit protein eL8 (Thermococcus kodakarensis (strain ATCC BAA-918 / JCM 12380 / KOD1) (Pyrococcus kodakaraensis (strain KOD1))).